We begin with the raw amino-acid sequence, 686 residues long: MRTNPLTTVRNLGILAHVDAGKTTVTERILYLTGTTHKRGEVHDGTTVTDFDPQERDRGITIFAAAVSCAWAGHRINLIDTPGHVDFADEVERSLRVLDGAVAVFDAVAGVEPQSESVWRQADRHGVPRIAFVNKMDRAGADLDAAVASIRERLHPVPLVVQLPIGTEDGFTGVVDLPRMRALVWADGADAAEEGPVPGTLREEAARRRRVLEEAVAERHPGALEEFCDRETLTAATLTGALRDLTRTGDGVVVLCGSAYRNRGVEPLLDAVVAYLPSPLDVPPVRGTHDGAERERPADPAAPMAALAFKVNATPTGRLTYLRVYSGTIGKGDTVWDAGTRRTERIGRILRVRADRHDPLERAVAGDIVAVVGLKTARAGSTLCAPGAPLLLEPPGVAEPVVHVAVEARRSTETDRLAAALARLTEEDPSLALRTDPETAQTVLSGMGELHLEVAVERVRREYGLEVTVGRPGVAYRETVGEGVTGFVHRHVKQDGGAGQFAHIVLDVEPWEQDADGDGAGGGFVFRSTVVGGRVPQEYVRAVEAGCRDALAEGPLGGHPVTGLRVTLTDGRTHVKDSSDTAFRTAGRFGLRDALRASGMILLEPVVEVTVTVPEDGVGGVLGDLAARRGRVTGSDPRGGAVVVTATVPLAELFGYATRLRSRTQGRGTFTARPTGYAQAPAAVVR.

A tr-type G domain is found at 7-280 (TTVRNLGILA…AVVAYLPSPL (274 aa)). GTP is bound by residues 16–23 (AHVDAGKT), 80–84 (DTPGH), and 134–137 (NKMD).

It belongs to the TRAFAC class translation factor GTPase superfamily. Classic translation factor GTPase family. EF-G/EF-2 subfamily.

It localises to the cytoplasm. Functionally, catalyzes the GTP-dependent ribosomal translocation step during translation elongation. During this step, the ribosome changes from the pre-translocational (PRE) to the post-translocational (POST) state as the newly formed A-site-bound peptidyl-tRNA and P-site-bound deacylated tRNA move to the P and E sites, respectively. Catalyzes the coordinated movement of the two tRNA molecules, the mRNA and conformational changes in the ribosome. The protein is Elongation factor G 2 (fusB) of Streptomyces coelicolor (strain ATCC BAA-471 / A3(2) / M145).